The chain runs to 316 residues: Pantothenate kinase (316 aa).

ATP is bound at residue 95-102 (GSVAVGKS).

Belongs to the prokaryotic pantothenate kinase family.

The protein localises to the cytoplasm. The enzyme catalyses (R)-pantothenate + ATP = (R)-4'-phosphopantothenate + ADP + H(+). It participates in cofactor biosynthesis; coenzyme A biosynthesis; CoA from (R)-pantothenate: step 1/5. The chain is Pantothenate kinase from Pectobacterium carotovorum subsp. carotovorum (strain PC1).